A 610-amino-acid polypeptide reads, in one-letter code: UvrABC system protein C (610 aa).

The region spanning 16–94 (SQPGVYRMYD…IKLYQPRYNV (79 aa)) is the GIY-YIG domain. The 36-residue stretch at 204–239 (DQVLTQLIARMEKASQDLAFEEAARIRDQIQAVRRV) folds into the UVR domain.

The protein belongs to the UvrC family. In terms of assembly, interacts with UvrB in an incision complex.

The protein resides in the cytoplasm. Its function is as follows. The UvrABC repair system catalyzes the recognition and processing of DNA lesions. UvrC both incises the 5' and 3' sides of the lesion. The N-terminal half is responsible for the 3' incision and the C-terminal half is responsible for the 5' incision. This is UvrABC system protein C from Salmonella paratyphi C (strain RKS4594).